We begin with the raw amino-acid sequence, 406 residues long: Tyrosine--tRNA ligase (406 aa).

Tyrosine 35 provides a ligand contact to L-tyrosine. Residues 40–49 (ATSASLHIGH) carry the 'HIGH' region motif. The L-tyrosine site is built by tyrosine 167 and glutamine 171. Positions 227 to 231 (KMGKS) match the 'KMSKS' region motif. Lysine 230 provides a ligand contact to ATP. The 65-residue stretch at 341 to 405 (ILLVDLMVLA…IGKKKILRIV (65 aa)) folds into the S4 RNA-binding domain.

Belongs to the class-I aminoacyl-tRNA synthetase family. TyrS type 1 subfamily. Homodimer.

The protein resides in the cytoplasm. It carries out the reaction tRNA(Tyr) + L-tyrosine + ATP = L-tyrosyl-tRNA(Tyr) + AMP + diphosphate + H(+). In terms of biological role, catalyzes the attachment of tyrosine to tRNA(Tyr) in a two-step reaction: tyrosine is first activated by ATP to form Tyr-AMP and then transferred to the acceptor end of tRNA(Tyr). In Borrelia duttonii (strain Ly), this protein is Tyrosine--tRNA ligase.